Reading from the N-terminus, the 362-residue chain is Neutral protease 2 homolog MEP2 (362 aa).

Residues 1-19 form the signal peptide; sequence MLFPSIVAALAALANPVLS. Residues 20–177 constitute a propeptide that is removed on maturation; that stretch reads LTIPQATGSE…SKAINPISAR (158 aa). 2 cysteine pairs are disulfide-bonded: Cys184/Cys255 and Cys262/Cys280. Position 304 (His304) interacts with Zn(2+). The active site involves Glu305. Zn(2+)-binding residues include His308 and Asp319.

The protein belongs to the peptidase M35 family. Requires Zn(2+) as cofactor.

Its subcellular location is the secreted. It catalyses the reaction Preferential cleavage of bonds with hydrophobic residues in P1'. Also 3-Asn-|-Gln-4 and 8-Gly-|-Ser-9 bonds in insulin B chain.. In terms of biological role, secreted metalloproteinase that allows assimilation of proteinaceous substrates. Shows high activities on basic nuclear substrates such as histone and protamine. May be involved in virulence. This is Neutral protease 2 homolog MEP2 (MEP2) from Coccidioides posadasii (strain C735) (Valley fever fungus).